Here is a 245-residue protein sequence, read N- to C-terminus: 3-deoxy-manno-octulosonate cytidylyltransferase (245 aa).

The protein belongs to the KdsB family.

It localises to the cytoplasm. It catalyses the reaction 3-deoxy-alpha-D-manno-oct-2-ulosonate + CTP = CMP-3-deoxy-beta-D-manno-octulosonate + diphosphate. Its pathway is nucleotide-sugar biosynthesis; CMP-3-deoxy-D-manno-octulosonate biosynthesis; CMP-3-deoxy-D-manno-octulosonate from 3-deoxy-D-manno-octulosonate and CTP: step 1/1. It functions in the pathway bacterial outer membrane biogenesis; lipopolysaccharide biosynthesis. Its function is as follows. Activates KDO (a required 8-carbon sugar) for incorporation into bacterial lipopolysaccharide in Gram-negative bacteria. The protein is 3-deoxy-manno-octulosonate cytidylyltransferase of Elusimicrobium minutum (strain Pei191).